The sequence spans 428 residues: Glutamate-1-semialdehyde 2,1-aminomutase (428 aa).

Lys265 carries the N6-(pyridoxal phosphate)lysine modification.

This sequence belongs to the class-III pyridoxal-phosphate-dependent aminotransferase family. HemL subfamily. In terms of assembly, homodimer. Requires pyridoxal 5'-phosphate as cofactor.

It is found in the cytoplasm. It catalyses the reaction (S)-4-amino-5-oxopentanoate = 5-aminolevulinate. It functions in the pathway porphyrin-containing compound metabolism; protoporphyrin-IX biosynthesis; 5-aminolevulinate from L-glutamyl-tRNA(Glu): step 2/2. The sequence is that of Glutamate-1-semialdehyde 2,1-aminomutase from Legionella pneumophila (strain Paris).